The chain runs to 308 residues: Homeobox-leucine zipper protein HOX2 (308 aa).

2 disordered regions span residues 15-36 (QGSL…SSPW) and 71-117 (QGRA…RKKL). Residues 74–88 (ASTSPDSAAALSSAS) show a composition bias toward low complexity. A DNA-binding region (homeobox) is located at residues 112-171 (GGRKKLRLSKDQAAVLEECFKTHSTLNPKQKVALANRLGLRPRQVEVWFQNRRARTKLKQ). Positions 170–214 (KQTEVDCEYLKRWCERLADENKRLEKELADLRALKAAPSPASASA) are leucine-zipper.

The protein belongs to the HD-ZIP homeobox family. Class II subfamily. In terms of assembly, homodimer. May form a heterodimer with HOX1, HOX3 or HOX7. Expressed in seedlings, roots, leaves, nodes, internodes, flowers and embryo.

The protein resides in the nucleus. Its function is as follows. Probable transcription factor that binds to the DNA sequence 5'-CAAT[GC]ATTG-3'. The protein is Homeobox-leucine zipper protein HOX2 (HOX2) of Oryza sativa subsp. indica (Rice).